The primary structure comprises 350 residues: Ribosomal RNA large subunit methyltransferase M (350 aa).

S-adenosyl-L-methionine-binding positions include 217–220 (APGG), Asp236, Asp256, and Asp272. Catalysis depends on Lys301, which acts as the Proton acceptor.

This sequence belongs to the class I-like SAM-binding methyltransferase superfamily. RNA methyltransferase RlmE family. RlmM subfamily. In terms of assembly, monomer.

Its subcellular location is the cytoplasm. It carries out the reaction cytidine(2498) in 23S rRNA + S-adenosyl-L-methionine = 2'-O-methylcytidine(2498) in 23S rRNA + S-adenosyl-L-homocysteine + H(+). Its function is as follows. Catalyzes the 2'-O-methylation at nucleotide C2498 in 23S rRNA. The sequence is that of Ribosomal RNA large subunit methyltransferase M from Teredinibacter turnerae (strain ATCC 39867 / T7901).